The sequence spans 184 residues: MSEIVSVSGGPTKPEIIAVSLSKLGLKDGDRFADVGCGTGSVSIEAARIARNLTIYAIDARKEALLATETNFKNFGIENARILAGEASDILGSEKTIDSIDCAFVGGTKNIGSILAKLVEKKARSIVVNAVRIETVVRTIEAMKSLDIFDEVIHVAVSRSFPIAGETMFKPENPVYIVVGKKQS.

S-adenosyl-L-methionine-binding positions include T12, 36 to 40, D59, and A87; that span reads GCGTG.

Belongs to the methyltransferase superfamily. Archaeal-type CbiT family.

The enzyme catalyses Co-precorrin-6B + S-adenosyl-L-methionine = Co-precorrin-7 + S-adenosyl-L-homocysteine + CO2. It participates in cofactor biosynthesis; adenosylcobalamin biosynthesis; cob(II)yrinate a,c-diamide from sirohydrochlorin (anaerobic route): step 8/10. In terms of biological role, catalyzes the methylation of C-15 in cobalt-precorrin-6B followed by the decarboxylation of C-12 to form cobalt-precorrin-7. The protein is Probable cobalt-precorrin-6B C(15)-methyltransferase (decarboxylating) of Methanosarcina mazei (strain ATCC BAA-159 / DSM 3647 / Goe1 / Go1 / JCM 11833 / OCM 88) (Methanosarcina frisia).